The following is an 856-amino-acid chain: DNA mismatch repair protein MutS (856 aa).

605–612 lines the ATP pocket; that stretch reads GPNMSGKS.

It belongs to the DNA mismatch repair MutS family.

In terms of biological role, this protein is involved in the repair of mismatches in DNA. It is possible that it carries out the mismatch recognition step. This protein has a weak ATPase activity. This Lysinibacillus sphaericus (strain C3-41) protein is DNA mismatch repair protein MutS.